Reading from the N-terminus, the 302-residue chain is tRNA pseudouridine synthase B (302 aa).

Catalysis depends on Asp48, which acts as the Nucleophile.

The protein belongs to the pseudouridine synthase TruB family. Type 1 subfamily.

It catalyses the reaction uridine(55) in tRNA = pseudouridine(55) in tRNA. Responsible for synthesis of pseudouridine from uracil-55 in the psi GC loop of transfer RNAs. The chain is tRNA pseudouridine synthase B from Xylella fastidiosa (strain Temecula1 / ATCC 700964).